A 603-amino-acid polypeptide reads, in one-letter code: Membrane protein insertase YidC (603 aa).

Residues 7-27 (FFITIALSVLILAVWQYFYVL) form a helical membrane-spanning segment. A compositionally biased stretch (basic and acidic residues) spans 38 to 51 (RVEQQRVEEQKKAA). The tract at residues 38–76 (RVEQQRVEEQKKAAEAANPGAGTPAPAPGTIPNAPGGDT) is disordered. The segment covering 52–74 (EAANPGAGTPAPAPGTIPNAPGG) has biased composition (low complexity). Transmembrane regions (helical) follow at residues 352–372 (FDLLIDWGWFHFITKPMFWLI), 378–398 (FLGNFGLAILATTVIVKALFF), 452–472 (WPVALQIPVFFSLYKVLYITI), 497–517 (LFGLIPVTLPHMLMIGVWPLI), and 540–560 (IFTWMPVIFTFMMAGFPAGLV).

It belongs to the OXA1/ALB3/YidC family. Type 1 subfamily. In terms of assembly, interacts with the Sec translocase complex via SecD. Specifically interacts with transmembrane segments of nascent integral membrane proteins during membrane integration.

The protein resides in the cell inner membrane. In terms of biological role, required for the insertion and/or proper folding and/or complex formation of integral membrane proteins into the membrane. Involved in integration of membrane proteins that insert both dependently and independently of the Sec translocase complex, as well as at least some lipoproteins. Aids folding of multispanning membrane proteins. The sequence is that of Membrane protein insertase YidC from Mesorhizobium japonicum (strain LMG 29417 / CECT 9101 / MAFF 303099) (Mesorhizobium loti (strain MAFF 303099)).